A 248-amino-acid polypeptide reads, in one-letter code: 4-hydroxy-tetrahydrodipicolinate reductase (248 aa).

NAD(+) is bound by residues 9-14 (GAQGRV), 77-79 (GTT), and 104-107 (APNF). The active-site Proton donor/acceptor is H134. H135 serves as a coordination point for (S)-2,3,4,5-tetrahydrodipicolinate. The active-site Proton donor is the K138. Residue 144 to 145 (GT) coordinates (S)-2,3,4,5-tetrahydrodipicolinate. Positions 157-176 (RREAGMPTQPDATEQSLDGA) are disordered.

Belongs to the DapB family.

It localises to the cytoplasm. It catalyses the reaction (S)-2,3,4,5-tetrahydrodipicolinate + NAD(+) + H2O = (2S,4S)-4-hydroxy-2,3,4,5-tetrahydrodipicolinate + NADH + H(+). It carries out the reaction (S)-2,3,4,5-tetrahydrodipicolinate + NADP(+) + H2O = (2S,4S)-4-hydroxy-2,3,4,5-tetrahydrodipicolinate + NADPH + H(+). The protein operates within amino-acid biosynthesis; L-lysine biosynthesis via DAP pathway; (S)-tetrahydrodipicolinate from L-aspartate: step 4/4. Catalyzes the conversion of 4-hydroxy-tetrahydrodipicolinate (HTPA) to tetrahydrodipicolinate. This chain is 4-hydroxy-tetrahydrodipicolinate reductase, found in Corynebacterium diphtheriae (strain ATCC 700971 / NCTC 13129 / Biotype gravis).